A 96-amino-acid polypeptide reads, in one-letter code: MVKIRLARGGAKKKPFYSIVATDSRRRRDSAYIERLGYFNPVTHGQEVRLIIEEARLAYWTSKGAQISDRVKQLVKEFKDPLIRERDIAVKSAKNL.

The protein belongs to the bacterial ribosomal protein bS16 family.

This chain is Small ribosomal subunit protein bS16, found in Vesicomyosocius okutanii subsp. Calyptogena okutanii (strain HA).